Consider the following 348-residue polypeptide: D-amino-acid oxidase (348 aa).

Residues A15, I18, K40, S52, G56, and N58 each contribute to the FAD site. Residues Y232 and R295 each contribute to the (R)-lactate site. Anthranilate-binding residues include Y232 and R295. The FAD site is built by R295, S323, G326, Y327, and Q328.

This sequence belongs to the DAMOX/DASOX family. The cofactor is FAD.

The protein resides in the peroxisome. The catalysed reaction is a D-alpha-amino acid + O2 + H2O = a 2-oxocarboxylate + H2O2 + NH4(+). It carries out the reaction D-serine + O2 + H2O = 3-hydroxypyruvate + H2O2 + NH4(+). It catalyses the reaction D-alanine + O2 + H2O = pyruvate + H2O2 + NH4(+). The enzyme catalyses D-arginine + O2 + H2O = 5-guanidino-2-oxopentanoate + H2O2 + NH4(+). In terms of biological role, catalyzes the oxidative deamination of D-amino acids with broad substrate specificity. Enables the organism to utilize D-amino acids as a source of nutrients. The polypeptide is D-amino-acid oxidase (Schizosaccharomyces pombe (strain 972 / ATCC 24843) (Fission yeast)).